Consider the following 225-residue polypeptide: UPF0758 protein BCE33L4198 (225 aa).

The region spanning 103–225 is the MPN domain; sequence SIRNPEDCAR…FVSLKEKGHI (123 aa). Zn(2+)-binding residues include histidine 174, histidine 176, and aspartate 187. Positions 174-187 match the JAMM motif motif; it reads HNHPSGDPAPSRED.

The protein belongs to the UPF0758 family.

The chain is UPF0758 protein BCE33L4198 from Bacillus cereus (strain ZK / E33L).